A 212-amino-acid polypeptide reads, in one-letter code: Protein G1-like7 (212 aa).

A compositionally biased stretch (low complexity) spans 1–22; sequence MDPSGPGPSSAAAGGAPAVAAA. Disordered regions lie at residues 1–34 and 148–212; these read MDPS…RYES and KARG…PSAS. In terms of domain architecture, ALOG spans 31 to 158; sequence RYESQKRRDW…ARGIPYEKKK (128 aa). Positions 156–160 match the Nuclear localization signal motif; it reads KKKRK. Positions 173–182 are enriched in low complexity; the sequence is SGSSSAAAAA. A compositionally biased stretch (gly residues) spans 183-194; the sequence is AGGGDTGSGGGA.

Belongs to the plant homeotic and developmental regulators ALOG protein family.

The protein localises to the nucleus. In terms of biological role, probable transcription regulator that acts as a developmental regulator by promoting cell growth in response to light. This chain is Protein G1-like7, found in Oryza sativa subsp. indica (Rice).